Here is a 1102-residue protein sequence, read N- to C-terminus: Voltage-gated delayed rectifier potassium channel KCNH8 (1102 aa).

The Cytoplasmic portion of the chain corresponds to 1 to 225 (MPVMKGLLAP…HFSTFKAGWD (225 aa)). Positions 18–90 (IATRFDGTHS…LQIEKSLEEK (73 aa)) constitute a PAS domain. The region spanning 93-145 (FKGEIMFYKKNGAPFWCLLDIVPIKNEKGDVVLFLASFKDITDTKVKITSEDK) is the PAC domain. A helical transmembrane segment spans residues 226–246 (WLILLATFYVAVTVPYNVCFI). The Extracellular segment spans residues 247 to 255 (GNEDLSTTR). A helical transmembrane segment spans residues 256-276 (STTVSDIAVEILFIIDIILNF). Topologically, residues 277 to 298 (RTTYVSKSGQVIFEARSICIHY) are cytoplasmic. A helical transmembrane segment spans residues 299–319 (VTTWFIIDLIAALPFDLLYAF). A glycan (N-linked (GlcNAc...) asparagine) is linked at asparagine 320. The Extracellular portion of the chain corresponds to 320-327 (NVTVVSLV). Residues 328–348 (HLLKTVRLLRLLRLLQKLDRY) form a helical; Voltage-sensor membrane-spanning segment. At 349 to 353 (SQHST) the chain is on the cytoplasmic side. The helical transmembrane segment at 354–374 (IVLTLLMSMFALLAHWMACIW) threads the bilayer. The Extracellular segment spans residues 375–419 (YVIGKMEREDNSLLKWEVGWLHELGKRLESPYYGNNTLGGPSIRS). A glycan (N-linked (GlcNAc...) asparagine) is linked at asparagine 409. An intramembrane region (pore-forming) is located at residues 420–440 (AYIAALYFTLSSLTSVGFGNV). Positions 434–439 (SVGFGN) match the Selectivity filter motif. Over 441–448 (SANTDAEK) the chain is Extracellular. A helical transmembrane segment spans residues 449 to 469 (IFSICTMLIGALMHALVFGNV). Residues 470–1102 (TAIIQRMYSR…DVKDSKAINV (633 aa)) are Cytoplasmic-facing. Positions 551 to 668 (LFECASRGCL…HKFVEDIQHD (118 aa)) are cNMP-binding domain. Disordered regions lie at residues 683-744 (SRLS…KTGS), 762-793 (PFHS…KEKN), 818-845 (EDGN…ISPS), and 960-983 (LVGS…LHHS). The segment covering 710–723 (VEDEEEEEVEEEET) has biased composition (acidic residues). Residues 777-793 (TKQEADPPNHGTRKEKN) are compositionally biased toward basic and acidic residues. The segment covering 968 to 982 (TEAHEQSPVDSELHH) has biased composition (basic and acidic residues).

The protein belongs to the potassium channel family. H (Eag) (TC 1.A.1.20) subfamily. Kv12.1/KCNH8 sub-subfamily. As to quaternary structure, the potassium channel is probably composed of a homo- or heterotetrameric complex of pore-forming alpha subunits that can associate with modulating beta subunits. In terms of tissue distribution, detected in superior cervical, mesenteric and coeliac ganglia. Expressed in brain (piriform cortex, olfactory tubercle, cerebral cortex, hippocampus pyramidial cells and dentate gyrus and basal ganglia of caudate/putamen and accumbens nucleus). Expressed in pituitary.

The protein localises to the membrane. The catalysed reaction is K(+)(in) = K(+)(out). Pore-forming (alpha) subunit of a voltage-gated delayed rectifier potassium channel that mediates outward-rectifying potassium currents. Elicits a slowly activating, non-inactivating and slowly deactivation outwards potassium current at depolarizating voltages from -30 mV to +50mV. Shows no obvious change in the activation rate from different holding potentials. Activation is strongly dependent on the pH of the external solution. This is Voltage-gated delayed rectifier potassium channel KCNH8 from Rattus norvegicus (Rat).